Consider the following 461-residue polypeptide: MALWGGRFSQGADSRFKQFNDSLRFDYRLAEQDIQGSMAWAKALVKVGVLTADEQGKLQQAMEVLLASVQQDPQQILISDAEDIHSWVESALIAAVGDLGKKLHTGRSRNDQVATDLKLWCKAQGELLLGSITALQQGLVASARANQAAVLPGYTHLQRAQPVTYAHWALAYVEMLERDYSRLQDALKRLDTSPLGCGALAGTAYAIDREALALDMGFAGATRNSLDSVSDRDHVVELMHVASLSMTHLSRFAEDLIFYNTGEAGFVELSDAVTSGSSLMPQKKNPDALELIRGKTGRVVGAQMGMLMSLKALPLAYNKDMQEDKEGLFDALDTWHDCLDMAALVLIDLKVNGERTMAAAQGGYANATELADYLVAKGIPFREAHHIVGETVVYAIQVKKPLEELTIGEFQRFSPVIEFDVYPNLELEATLAKRVAKGGVAREQVEAALIAAETWLAKRAG.

The protein belongs to the lyase 1 family. Argininosuccinate lyase subfamily.

The protein resides in the cytoplasm. It catalyses the reaction 2-(N(omega)-L-arginino)succinate = fumarate + L-arginine. It functions in the pathway amino-acid biosynthesis; L-arginine biosynthesis; L-arginine from L-ornithine and carbamoyl phosphate: step 3/3. This chain is Argininosuccinate lyase, found in Aeromonas hydrophila subsp. hydrophila (strain ATCC 7966 / DSM 30187 / BCRC 13018 / CCUG 14551 / JCM 1027 / KCTC 2358 / NCIMB 9240 / NCTC 8049).